The following is a 332-amino-acid chain: Twinfilin-1 (332 aa).

Residues 5–132 (SGIVAEQALL…VDLKNFDSAR (128 aa)) enclose the ADF-H 1 domain. Ser-167 and Ser-172 each carry phosphoserine. The 128-residue stretch at 173-300 (PLSLTFRVNS…DKSLLMATNK (128 aa)) folds into the ADF-H 2 domain. Residues 301–332 (EDSLDHGSNPDLPNKSNLKFNKPKGPLRKRRT) form a disordered region. Residues 321–332 (NKPKGPLRKRRT) are compositionally biased toward basic residues.

The protein belongs to the actin-binding proteins ADF family. Twinfilin subfamily. Interacts with G-actin; ADP-actin form.

The protein resides in the cytoplasm. It localises to the cytoskeleton. Functionally, actin-binding protein involved in motile and morphological processes. Inhibits actin polymerization, likely by sequestering G-actin. Prevents actin filament assembly by forming a 1:1 complex with actin monomers, and inhibits the nucleotide exchange reaction of actin monomers. In Saccharomyces cerevisiae (strain ATCC 204508 / S288c) (Baker's yeast), this protein is Twinfilin-1 (TWF1).